The following is a 104-amino-acid chain: ATP-dependent Clp protease adapter protein ClpS (104 aa).

Belongs to the ClpS family. In terms of assembly, binds to the N-terminal domain of the chaperone ClpA.

In terms of biological role, involved in the modulation of the specificity of the ClpAP-mediated ATP-dependent protein degradation. The chain is ATP-dependent Clp protease adapter protein ClpS from Neisseria gonorrhoeae (strain ATCC 700825 / FA 1090).